Consider the following 344-residue polypeptide: Tryptophan--tRNA ligase (344 aa).

ATP contacts are provided by residues Gln20–Ser22 and Gly28–Asn29. Positions Pro21–Asn29 match the 'HIGH' region motif. Asp144 serves as a coordination point for L-tryptophan. ATP is bound by residues Gly156 to Asp158, Val197, and Lys206 to Ser210. The 'KMSKS' region motif lies at Lys206–Ser210.

This sequence belongs to the class-I aminoacyl-tRNA synthetase family. As to quaternary structure, homodimer.

It localises to the cytoplasm. The enzyme catalyses tRNA(Trp) + L-tryptophan + ATP = L-tryptophyl-tRNA(Trp) + AMP + diphosphate + H(+). Catalyzes the attachment of tryptophan to tRNA(Trp). The chain is Tryptophan--tRNA ligase from Caulobacter vibrioides (strain ATCC 19089 / CIP 103742 / CB 15) (Caulobacter crescentus).